A 232-amino-acid chain; its full sequence is Octanoyltransferase (232 aa).

The region spanning 44–219 (EYTADEIWVV…QLARQFGLVL (176 aa)) is the BPL/LPL catalytic domain. Substrate contacts are provided by residues 83–90 (RGGQVTYH), 150–152 (ALG), and 163–165 (GLS). Cys-181 serves as the catalytic Acyl-thioester intermediate.

This sequence belongs to the LipB family.

The protein localises to the cytoplasm. It catalyses the reaction octanoyl-[ACP] + L-lysyl-[protein] = N(6)-octanoyl-L-lysyl-[protein] + holo-[ACP] + H(+). Its pathway is protein modification; protein lipoylation via endogenous pathway; protein N(6)-(lipoyl)lysine from octanoyl-[acyl-carrier-protein]: step 1/2. Catalyzes the transfer of endogenously produced octanoic acid from octanoyl-acyl-carrier-protein onto the lipoyl domains of lipoate-dependent enzymes. Lipoyl-ACP can also act as a substrate although octanoyl-ACP is likely to be the physiological substrate. This chain is Octanoyltransferase, found in Xanthomonas axonopodis pv. citri (strain 306).